The following is a 303-amino-acid chain: Heme A synthase (303 aa).

Residues 1–8 are Cytoplasmic-facing; that stretch reads MFGKKNLK. A helical transmembrane segment spans residues 9 to 29; that stretch reads WLGVVATLMMTFVQLGGALVT. At 30–67 the chain is on the extracellular side; sequence KTGSADGCGSSWPLCHGALIPEFFPIDTIIELSHRAVS. Residues cysteine 37 and cysteine 44 are joined by a disulfide bond. The active site involves glutamate 60. Heme o is bound at residue histidine 63. A helical membrane pass occupies residues 68 to 88; it reads ALSLLMVLWLVITAWKHIGYI. The Cytoplasmic segment spans residues 89–93; it reads KEIKP. The helical transmembrane segment at 94–114 threads the bilayer; sequence LSIISVGFLLLQALIGAAAVI. Topologically, residues 115–125 are extracellular; sequence WQQNDYVLALH. Histidine 125 contacts heme o. The chain crosses the membrane as a helical span at residues 126-146; the sequence is FGISLISFSSVFLITLIIFSI. Residues 147–163 are Cytoplasmic-facing; the sequence is DQKYEADELYIKKPLRR. A helical transmembrane segment spans residues 164 to 184; it reads LTWLMAIIIYCGVYTGALVRH. Residues 185–215 lie on the Extracellular side of the membrane; it reads ADASLAYGGWPLPFHDLVPHSEQDWVQLTHR. Histidine 214 provides a ligand contact to heme b. The chain crosses the membrane as a helical span at residues 216–236; it reads IMAFIVFTIIMITYIHAVKNY. Topologically, residues 237 to 244 are cytoplasmic; it reads PNNRTVHY. A helical transmembrane segment spans residues 245 to 265; the sequence is GYTAAFILVILQVITGALSIM. Topologically, residues 266–270 are extracellular; it reads TNVNL. A helical membrane pass occupies residues 271–291; sequence LIALFHALFITYLFGMTTYFI. Residue histidine 276 participates in heme b binding. The Cytoplasmic segment spans residues 292 to 303; the sequence is MLMLRSVRSDKQ.

Belongs to the COX15/CtaA family. Type 1 subfamily. Interacts with CtaB. It depends on heme b as a cofactor.

The protein resides in the cell membrane. It catalyses the reaction Fe(II)-heme o + 2 A + H2O = Fe(II)-heme a + 2 AH2. Its pathway is porphyrin-containing compound metabolism; heme A biosynthesis; heme A from heme O: step 1/1. Catalyzes the conversion of heme O to heme A by two successive hydroxylations of the methyl group at C8. The first hydroxylation forms heme I, the second hydroxylation results in an unstable dihydroxymethyl group, which spontaneously dehydrates, resulting in the formyl group of heme A. The polypeptide is Heme A synthase (Staphylococcus aureus (strain MSSA476)).